The chain runs to 372 residues: Cytochrome b (372 aa).

The next 4 membrane-spanning stretches (helical) occupy residues 25 to 45, 69 to 90, 105 to 125, and 170 to 190; these read FGSMLLTCLALQTMTGFFLAI, WIMQNIHAISASLFFICIYIHI, WLSGTTLLITLMATAFFGYVL, and FFALHFILPFAIISLSSIHII. 2 residues coordinate heme b: His75 and His89. Residues His174 and His188 each coordinate heme b. His193 serves as a coordination point for a ubiquinone. The next 4 membrane-spanning stretches (helical) occupy residues 218 to 238, 280 to 300, 312 to 332, and 339 to 358; these read YKDMLMITSMITLLFIILSFS, LGGTLALLTSVAILTTVPFTH, LSQALFWTLIATFITITWTAS, and FVTISQTTSIIYFSFFITIP.

Belongs to the cytochrome b family. In terms of assembly, the cytochrome bc1 complex contains 3 respiratory subunits (MT-CYB, CYC1 and UQCRFS1), 2 core proteins (UQCRC1 and UQCRC2) and probably 6 low-molecular weight proteins. Heme b serves as cofactor.

The protein resides in the mitochondrion inner membrane. Functionally, component of the ubiquinol-cytochrome c reductase complex (complex III or cytochrome b-c1 complex) that is part of the mitochondrial respiratory chain. The b-c1 complex mediates electron transfer from ubiquinol to cytochrome c. Contributes to the generation of a proton gradient across the mitochondrial membrane that is then used for ATP synthesis. This chain is Cytochrome b (MT-CYB), found in Naja multifasciata (Burrowing cobra).